The primary structure comprises 449 residues: C4-dicarboxylate transport protein (449 aa).

Residues 1–20 (MSALTESFGPVPSAKSKPPA) form a disordered region. The segment covering 10–20 (PVPSAKSKPPA) has biased composition (low complexity). 8 consecutive transmembrane segments (helical) span residues 28 to 48 (LLYLQVLVAIVLGVLLGWLSP), 66 to 86 (LIKMVIAPIIFCTVVSGIAHI), 101 to 121 (LYFEVVSSFALLIGLVVGNVV), 167 to 187 (GDILQVLLFAILFGFALMTLG), 205 to 225 (FGVIAIVMKAAPVGAFGAMAF), 241 to 261 (LIAVFYITAALFVVLVLGLIA), 326 to 346 (IYMTLATLFIAQALGVDLTWT), and 370 to 390 (FITLAATLSVVNPALVPGMAI).

It belongs to the dicarboxylate/amino acid:cation symporter (DAACS) (TC 2.A.23) family.

It localises to the cell inner membrane. Functionally, responsible for the transport of dicarboxylates such as succinate, fumarate, and malate from the periplasm across the membrane. This chain is C4-dicarboxylate transport protein, found in Rhodopseudomonas palustris (strain BisB18).